A 375-amino-acid polypeptide reads, in one-letter code: 23S rRNA (uracil(747)-C(5))-methyltransferase RlmC (375 aa).

Positions 3, 11, 14, and 87 each coordinate [4Fe-4S] cluster. Residues glutamine 212, phenylalanine 241, glutamate 262, and asparagine 307 each coordinate S-adenosyl-L-methionine. The active-site Nucleophile is cysteine 334.

It belongs to the class I-like SAM-binding methyltransferase superfamily. RNA M5U methyltransferase family. RlmC subfamily.

The enzyme catalyses uridine(747) in 23S rRNA + S-adenosyl-L-methionine = 5-methyluridine(747) in 23S rRNA + S-adenosyl-L-homocysteine + H(+). Catalyzes the formation of 5-methyl-uridine at position 747 (m5U747) in 23S rRNA. This is 23S rRNA (uracil(747)-C(5))-methyltransferase RlmC from Salmonella typhi.